The chain runs to 174 residues: RNA pyrophosphohydrolase (174 aa).

Residues 6 to 149 (GYRPNVGIIL…KRDVYLGALK (144 aa)) enclose the Nudix hydrolase domain. The Nudix box motif lies at 38–59 (GGIKPGESPETAMYRELYEEVG).

The protein belongs to the Nudix hydrolase family. RppH subfamily. It depends on a divalent metal cation as a cofactor.

In terms of biological role, accelerates the degradation of transcripts by removing pyrophosphate from the 5'-end of triphosphorylated RNA, leading to a more labile monophosphorylated state that can stimulate subsequent ribonuclease cleavage. The sequence is that of RNA pyrophosphohydrolase from Neisseria meningitidis serogroup C / serotype 2a (strain ATCC 700532 / DSM 15464 / FAM18).